Consider the following 159-residue polypeptide: Photosystem II extrinsic protein U, chloroplastic (159 aa).

The protein belongs to the PsbU family. As to quaternary structure, PSII is composed of 1 copy each of membrane proteins PsbA, PsbB, PsbC, PsbD, PsbE, PsbF, PsbH, PsbI, PsbJ, PsbK, PsbL, PsbM, PsbT, PsbX, PsbY, PsbZ, Psb30/Ycf12, at least 3 peripheral proteins of the oxygen-evolving complex and a large number of cofactors. It forms dimeric complexes. Part of the oxygen-evolving complex of photosystem II.

It localises to the plastid. Its subcellular location is the chloroplast thylakoid membrane. Its function is as follows. One of the extrinsic, lumenal subunits of photosystem II (PSII). PSII is a light-driven water plastoquinone oxidoreductase, using light energy to abstract electrons from H(2)O, generating a proton gradient subsequently used for ATP formation. The extrinsic proteins stabilize the structure of photosystem II oxygen-evolving complex (OEC), the ion environment of oxygen evolution and protect the OEC against heat-induced inactivation. This Karenia brevis (Red tide dinoflagellate) protein is Photosystem II extrinsic protein U, chloroplastic.